We begin with the raw amino-acid sequence, 248 residues long: Coproheme decarboxylase (248 aa).

Fe-coproporphyrin III contacts are provided by residues R130, Y144, 144 to 148 (YPMDK), K148, H171, Q184, and S222. The active site involves Y144.

This sequence belongs to the ChdC family. Type 1 subfamily. As to quaternary structure, homopentamer. It depends on Fe-coproporphyrin III as a cofactor.

The catalysed reaction is Fe-coproporphyrin III + 2 H2O2 + 2 H(+) = heme b + 2 CO2 + 4 H2O. It catalyses the reaction Fe-coproporphyrin III + H2O2 + H(+) = harderoheme III + CO2 + 2 H2O. It carries out the reaction harderoheme III + H2O2 + H(+) = heme b + CO2 + 2 H2O. Its pathway is porphyrin-containing compound metabolism; protoheme biosynthesis. Involved in coproporphyrin-dependent heme b biosynthesis. Catalyzes the decarboxylation of Fe-coproporphyrin III (coproheme) to heme b (protoheme IX), the last step of the pathway. The reaction occurs in a stepwise manner with a three-propionate harderoheme intermediate. The protein is Coproheme decarboxylase of Geobacillus stearothermophilus (strain DSM 13240 / CIP 106956 / 10).